Consider the following 347-residue polypeptide: N-acetyl-gamma-glutamyl-phosphate reductase (347 aa).

Cys151 is an active-site residue.

This sequence belongs to the NAGSA dehydrogenase family. Type 1 subfamily.

It is found in the cytoplasm. It carries out the reaction N-acetyl-L-glutamate 5-semialdehyde + phosphate + NADP(+) = N-acetyl-L-glutamyl 5-phosphate + NADPH + H(+). The protein operates within amino-acid biosynthesis; L-arginine biosynthesis; N(2)-acetyl-L-ornithine from L-glutamate: step 3/4. In terms of biological role, catalyzes the NADPH-dependent reduction of N-acetyl-5-glutamyl phosphate to yield N-acetyl-L-glutamate 5-semialdehyde. This Corynebacterium glutamicum (strain R) protein is N-acetyl-gamma-glutamyl-phosphate reductase.